The chain runs to 638 residues: Terrein cluster-specific transcription factor terR (638 aa).

Positions 50–76 (CDMCKSKKVRCDGGTPCSYCNLHDLRC) form a DNA-binding region, zn(2)-C6 fungal-type.

It localises to the nucleus. In terms of biological role, transcription factor that regulates specifically the terrein biosynthesis gene cluster. Recognizes CGG direct repeat consensus sequences in the terrein cluster forming the high affinity consensus motif TCGGHHWYHCGGH. In Aspergillus terreus (strain NIH 2624 / FGSC A1156), this protein is Terrein cluster-specific transcription factor terR.